A 784-amino-acid chain; its full sequence is DNA repair and recombination protein RAD54-like (784 aa).

A disordered region spans residues 1 to 50 (MRRSLAPSQRGPLRPESRHSFTPPLLKKNKRSCQQELEREQELDRKRQSA). Residues 2-9 (RRSLAPSQ) are required for chromatin remodeling, strand pairing activities and coupling of ATPase activity. Residue S20 is modified to Phosphoserine. T22 carries the phosphothreonine modification. A compositionally biased stretch (basic and acidic residues) spans 36–47 (ELEREQELDRKR). The Helicase ATP-binding domain occupies 172-346 (EGKRGNFNGC…YSLVNFVNPE (175 aa)). 185–192 (DEMGLGKT) lines the ATP pocket. The DEGH box signature appears at 297–300 (DEGH). Residues 503-660 (LLDFMLAAIR…NNESAEKHFT (158 aa)) form the Helicase C-terminal domain. Residues 747–756 (VASAEEAASE) show a composition bias toward low complexity. Residues 747–784 (VASAEEAASEQPEEKPDRRKRPSTPLSDDSADEDFLGF) are disordered. Over residues 775–784 (DSADEDFLGF) the composition is skewed to acidic residues.

It belongs to the SNF2/RAD54 helicase family. As to quaternary structure, interacts (via N-terminus) with spn-A/Rad51.

The protein resides in the nucleus. In terms of biological role, involved in mitotic DNA repair and meiotic recombination. Functions in the recombinational DNA repair pathway. Essential for interhomolog gene conversion (GC), but may have a less important role in intersister GC than spn-A/Rad51. In the presence of DNA, spn-A/Rad51 enhances the ATPase activity of okr/Rad54. The protein is DNA repair and recombination protein RAD54-like of Drosophila erecta (Fruit fly).